A 182-amino-acid polypeptide reads, in one-letter code: Ribosome-recycling factor (182 aa).

It belongs to the RRF family.

The protein resides in the cytoplasm. Functionally, responsible for the release of ribosomes from messenger RNA at the termination of protein biosynthesis. May increase the efficiency of translation by recycling ribosomes from one round of translation to another. The polypeptide is Ribosome-recycling factor (Nostoc sp. (strain PCC 7120 / SAG 25.82 / UTEX 2576)).